Consider the following 312-residue polypeptide: MAGITAALVKELRDKTGVGMMDCKKALGETDGDFEAAVDWLRKKGLSKAAKKADRVAAEGLVAVATQGGQGAVVEVNSETDFVARNEKFQTAVKEIAALAIGGSGDVAEIKAASTSGGSTVEDHLTNLIATIGENMALRRAAVVVAEPGVVASYVHNPAATDMGAIGVLVGLQSDGDKDKLAELGRKIAMHVAAGSPAVAVSVDVDGVDSAIADKEREVFADQARQAGKPDSIVEKMVEGRMRKFYEEVVLLKQAFVMDPDNTIEQVLEAAAKDLGAPVTISGFVRMALGEGVEKGPEEDFAAEVAAASGQS.

An involved in Mg(2+) ion dislocation from EF-Tu region spans residues 80-83 (TDFV).

The protein belongs to the EF-Ts family.

Its subcellular location is the cytoplasm. In terms of biological role, associates with the EF-Tu.GDP complex and induces the exchange of GDP to GTP. It remains bound to the aminoacyl-tRNA.EF-Tu.GTP complex up to the GTP hydrolysis stage on the ribosome. In Maricaulis maris (strain MCS10) (Caulobacter maris), this protein is Elongation factor Ts.